Here is a 193-residue protein sequence, read N- to C-terminus: Probable GTP-binding protein EngB (193 aa).

Positions G20–I193 constitute an EngB-type G domain. Residues G28–S35, G55–Q59, D73–G76, T140–D143, and I171–S176 contribute to the GTP site. Positions 35 and 57 each coordinate Mg(2+).

Belongs to the TRAFAC class TrmE-Era-EngA-EngB-Septin-like GTPase superfamily. EngB GTPase family. Mg(2+) serves as cofactor.

Its function is as follows. Necessary for normal cell division and for the maintenance of normal septation. The polypeptide is Probable GTP-binding protein EngB (Anaplasma phagocytophilum (strain HZ)).